Reading from the N-terminus, the 532-residue chain is Muscarinic acetylcholine receptor M5 (532 aa).

Over 1 to 29 the chain is Extracellular; the sequence is MEGDSYHNATTVNGTPVYHQPLERHRLWE. The N-linked (GlcNAc...) asparagine glycan is linked to N8. A helical membrane pass occupies residues 30–53; sequence VISIAAVTAVVSLITIVGNVLVMI. The Cytoplasmic segment spans residues 54 to 66; the sequence is SFKVNSQLKTVNN. A helical transmembrane segment spans residues 67-87; the sequence is YYLLSLACADLIIGIFSMNLY. Residues 88-104 are Extracellular-facing; sequence TTYILMGRWALGSLACD. C103 and C183 are disulfide-bonded. The helical transmembrane segment at 105-126 threads the bilayer; the sequence is LWLALDYVASNASVMNLLVISF. The Cytoplasmic portion of the chain corresponds to 127–146; the sequence is DRYFSITRPLTYRAKRTPKR. Residues 147-169 form a helical membrane-spanning segment; that stretch reads AGVMIGLAWLISFILWAPAILCW. Over 170 to 191 the chain is Extracellular; it reads QYLVGKRTVPLDECQIQFLSEP. Residues 192 to 214 traverse the membrane as a helical segment; the sequence is TITFGTAIAAFYIPVSVMTILYC. The Cytoplasmic portion of the chain corresponds to 215 to 443; that stretch reads RIYRETEKRT…LVKERKAAQT (229 aa). Residues 262-365 form a disordered region; that stretch reads AQRERNQTSW…SDTPNYFLSP (104 aa). The span at 269-281 shows a compositional bias: low complexity; the sequence is TSWSSSRRSASTS. Positions 282–308 are enriched in polar residues; it reads GKPSQATDPSTNQAKAEQLTTCSSYPS. Residues 444–464 form a helical membrane-spanning segment; it reads LSAILLAFIITWTPYNIMVLV. At 465–478 the chain is on the extracellular side; the sequence is STFCDKCVPVTLWH. Residues 479-498 form a helical membrane-spanning segment; that stretch reads LGYWLCYVNSTVNPICYALC. The Cytoplasmic portion of the chain corresponds to 499–532; the sequence is NRTFRKTFKMLLLCRWKKKKVEEKLYWQGNSKLP. Phosphothreonine is present on residues T501 and T505.

Belongs to the G-protein coupled receptor 1 family. Muscarinic acetylcholine receptor subfamily. CHRM5 sub-subfamily.

It localises to the cell membrane. It is found in the postsynaptic cell membrane. Its function is as follows. The muscarinic acetylcholine receptor mediates various cellular responses, including inhibition of adenylate cyclase, breakdown of phosphoinositides and modulation of potassium channels through the action of G proteins. Primary transducing effect is Pi turnover. This chain is Muscarinic acetylcholine receptor M5 (CHRM5), found in Macaca mulatta (Rhesus macaque).